We begin with the raw amino-acid sequence, 579 residues long: General transcription and DNA repair factor IIH subunit TFB1-3 (579 aa).

2 BSD domains span residues 107-161 and 186-238; these read LTPA…GKDS and RTNR…YLYS.

The protein belongs to the TFB1 family. In terms of assembly, component of the 7-subunit TFIIH core complex composed of XPB, XPD, TFB1/GTF2H1, GTF2H2/P44, TFB4/GTF2H3, TFB2/GTF2H4 and TFB5/GTF2H5, which is active in NER. The core complex associates with the 3-subunit CDK-activating kinase (CAK) module composed of CYCH1/cyclin H1, CDKD and MAT1/At4g30820 to form the 10-subunit holoenzyme (holo-TFIIH) active in transcription.

The protein resides in the nucleus. In terms of biological role, component of the general transcription and DNA repair factor IIH (TFIIH) core complex, which is involved in general and transcription-coupled nucleotide excision repair (NER) of damaged DNA and, when complexed to CAK, in RNA transcription by RNA polymerase II. In NER, TFIIH acts by opening DNA around the lesion to allow the excision of the damaged oligonucleotide and its replacement by a new DNA fragment. In transcription, TFIIH has an essential role in transcription initiation. When the pre-initiation complex (PIC) has been established, TFIIH is required for promoter opening and promoter escape. Phosphorylation of the C-terminal tail (CTD) of the largest subunit of RNA polymerase II by the kinase module CAK controls the initiation of transcription. This chain is General transcription and DNA repair factor IIH subunit TFB1-3, found in Arabidopsis thaliana (Mouse-ear cress).